Consider the following 448-residue polypeptide: Cytoplasmic tRNA 2-thiolation protein 2 (448 aa).

Belongs to the CTU2/NCS2 family.

The protein localises to the cytoplasm. The protein operates within tRNA modification; 5-methoxycarbonylmethyl-2-thiouridine-tRNA biosynthesis. Plays a central role in 2-thiolation of mcm(5)S(2)U at tRNA wobble positions of tRNA(Lys), tRNA(Glu) and tRNA(Gln). May act by forming a heterodimer with NCS6 that ligates sulfur from thiocarboxylated URM1 onto the uridine of tRNAs at wobble position. Prior mcm(5) tRNA modification by the elongator complex is required for 2-thiolation. May also be involved in protein urmylation. The protein is Cytoplasmic tRNA 2-thiolation protein 2 of Lodderomyces elongisporus (strain ATCC 11503 / CBS 2605 / JCM 1781 / NBRC 1676 / NRRL YB-4239) (Yeast).